The sequence spans 399 residues: Acetate kinase (399 aa).

A Mg(2+)-binding site is contributed by N7. Residue K14 participates in ATP binding. Position 91 (R91) interacts with substrate. Residue D148 is the Proton donor/acceptor of the active site. ATP-binding positions include H208–G212 and D283–R285. Position 384 (E384) interacts with Mg(2+).

This sequence belongs to the acetokinase family. As to quaternary structure, homodimer. Mg(2+) is required as a cofactor. The cofactor is Mn(2+).

It is found in the cytoplasm. The enzyme catalyses acetate + ATP = acetyl phosphate + ADP. It functions in the pathway metabolic intermediate biosynthesis; acetyl-CoA biosynthesis; acetyl-CoA from acetate: step 1/2. Its function is as follows. Catalyzes the formation of acetyl phosphate from acetate and ATP. Can also catalyze the reverse reaction. The polypeptide is Acetate kinase (Dictyoglomus thermophilum (strain ATCC 35947 / DSM 3960 / H-6-12)).